A 209-amino-acid polypeptide reads, in one-letter code: Large ribosomal subunit protein uL3 (209 aa).

Residues 133 to 152 (THGNSLSHRVPGSIGQNQTP) form a disordered region. Position 150 is an N5-methylglutamine (glutamine 150).

It belongs to the universal ribosomal protein uL3 family. In terms of assembly, part of the 50S ribosomal subunit. Forms a cluster with proteins L14 and L19. Post-translationally, methylated by PrmB.

Its function is as follows. One of the primary rRNA binding proteins, it binds directly near the 3'-end of the 23S rRNA, where it nucleates assembly of the 50S subunit. The protein is Large ribosomal subunit protein uL3 of Shigella sonnei (strain Ss046).